Reading from the N-terminus, the 60-residue chain is Rubredoxin 4 (60 aa).

The 52-residue stretch at 4–55 folds into the Rubredoxin-like domain; it reads YKLYQCAQCGFEYDEAVGWPEDGIEPGTRWDDIPEDWSCPDCGAAKSDFFMV. Positions 9, 12, 42, and 45 each coordinate Fe cation.

Belongs to the rubredoxin family. The cofactor is Fe(3+).

Involved in the hydrocarbon hydroxylating system, which transfers electrons from NADH to rubredoxin reductase and then through rubredoxin to alkane 1 monooxygenase. The polypeptide is Rubredoxin 4 (rubA4) (Rhodococcus sp. (strain Q15)).